Here is a 588-residue protein sequence, read N- to C-terminus: Aspartate--tRNA ligase (588 aa).

Position 172 (Glu-172) interacts with L-aspartate. The tract at residues 196–199 (QLFK) is aspartate. Residue Arg-218 participates in L-aspartate binding. ATP contacts are provided by residues 218–220 (RDE) and Gln-227. An L-aspartate-binding site is contributed by His-449. Residue Glu-483 coordinates ATP. Residue Arg-490 participates in L-aspartate binding. 535–538 (GLDR) is a binding site for ATP.

Belongs to the class-II aminoacyl-tRNA synthetase family. Type 1 subfamily. Homodimer.

The protein localises to the cytoplasm. It catalyses the reaction tRNA(Asp) + L-aspartate + ATP = L-aspartyl-tRNA(Asp) + AMP + diphosphate. Functionally, catalyzes the attachment of L-aspartate to tRNA(Asp) in a two-step reaction: L-aspartate is first activated by ATP to form Asp-AMP and then transferred to the acceptor end of tRNA(Asp). The protein is Aspartate--tRNA ligase of Haemophilus influenzae (strain ATCC 51907 / DSM 11121 / KW20 / Rd).